A 127-amino-acid polypeptide reads, in one-letter code: Fumarate reductase subunit C (127 aa).

A run of 3 helical transmembrane segments spans residues 30-50 (ATVL…GSLV), 67-87 (IVVA…QTFF), and 107-127 (IIVL…LIVM).

It belongs to the FrdC family. Part of an enzyme complex containing four subunits: a flavoprotein (FrdA), an iron-sulfur protein (FrdB), and two hydrophobic anchor proteins (FrdC and FrdD).

It localises to the cell inner membrane. In terms of biological role, anchors the catalytic components of the fumarate reductase complex to the cell membrane, binds quinones. The sequence is that of Fumarate reductase subunit C from Vibrio campbellii (strain ATCC BAA-1116).